The chain runs to 147 residues: Myoglobin (147 aa).

A Globin domain is found at 2-141 (ADFDMVLKCW…IIADMEADYK (140 aa)). Residue H60 participates in nitrite binding. H60 is an O2 binding site. H89 contacts heme b.

It belongs to the globin family. As to quaternary structure, monomeric.

The protein resides in the cytoplasm. It localises to the sarcoplasm. The catalysed reaction is Fe(III)-heme b-[protein] + nitric oxide + H2O = Fe(II)-heme b-[protein] + nitrite + 2 H(+). It catalyses the reaction H2O2 + AH2 = A + 2 H2O. In terms of biological role, monomeric heme protein which primary function is to store oxygen and facilitate its diffusion within muscle tissues. Reversibly binds oxygen through a pentacoordinated heme iron and enables its timely and efficient release as needed during periods of heightened demand. Depending on the oxidative conditions of tissues and cells, and in addition to its ability to bind oxygen, it also has a nitrite reductase activity whereby it regulates the production of bioactive nitric oxide. Under stress conditions, like hypoxia and anoxia, it also protects cells against reactive oxygen species thanks to its pseudoperoxidase activity. The polypeptide is Myoglobin (mb) (Gobionotothen gibberifrons (Humped rockcod)).